The following is a 375-amino-acid chain: Alpha-1,2-galactosyltransferase (375 aa).

Topologically, residues M1–R2 are cytoplasmic. The chain crosses the membrane as a helical; Signal-anchor for type II membrane protein span at residues F3–W23. Residues T24–S375 are Lumenal-facing.

This sequence belongs to the glycosyltransferase 34 family. Post-translationally, O-glycosylated.

The protein localises to the golgi apparatus membrane. Involved in the O- and N-linked oligosaccharide modification of proteins transported through the Golgi stack. This occurs in cis Golgi where the enzyme transfers galactose from UDP-galactose to a variety of mannose based acceptors. The protein is Alpha-1,2-galactosyltransferase (gma12) of Schizosaccharomyces pombe (strain 972 / ATCC 24843) (Fission yeast).